The primary structure comprises 36 residues: Egg-laying-like hormone (36 aa).

Lys36 carries the post-translational modification Lysine amide.

As to expression, supra, subesophageal ganglia and segmental ganglia of the ventral nerve cord and brain.

May be involved in leech reproduction. This chain is Egg-laying-like hormone, found in Theromyzon tessulatum (Duck leech).